Here is a 569-residue protein sequence, read N- to C-terminus: Apical membrane antigen 1 (569 aa).

Positions 1–48 (MICSIMGGLRSLRAARPYSHQSNTETKHMGLVGVASLLVLVADCTIFA) are cleaved as a signal peptide. Positions 49-66 (SGLSSSTRSRESQTLSAS) are cleaved as a propeptide — removed in mature form; required for microneme targeting of the proprotein. The Extracellular segment spans residues 49–483 (SGLSSSTRSR…DEQNECGSNT (435 aa)). The segment at 67-287 (TSGNPFQANV…NPDAFISKCP (221 aa)) is DI. An N-linked (GlcNAc...) asparagine glycan is attached at Asn86. 8 cysteine pairs are disulfide-bonded: Cys117–Cys286, Cys194–Cys226, Cys242–Cys255, Cys304–Cys393, Cys324–Cys384, Cys435–Cys459, Cys447–Cys471, and Cys452–Cys479. A DII region spans residues 288-415 (NQALRGYRFG…AGSLSEETPN (128 aa)). The tract at residues 416 to 487 (FIIPSNPSVT…ECGSNTALIA (72 aa)) is DIII. A helical membrane pass occupies residues 484–504 (ALIAGLAVGGVLLLALLGGGC). At 505–569 (YFAKRLDRNK…ETHVMVEGDY (65 aa)) the chain is on the cytoplasmic side. Residues 518 to 530 (AAHHEHEFQSDRG) are compositionally biased toward basic and acidic residues. The tract at residues 518 to 548 (AAHHEHEFQSDRGARKKRPSDLMQEAEPSFW) is disordered.

This sequence belongs to the apicomplexan parasites AMA1 family. As to quaternary structure, component of the moving junction (MJ) complex, composed of AMA1, a transmembrane protein on the parasite surface, and a complex of the rhoptry neck proteins RON2, RON4, RON5 and RON8 localized to the cytoplasmic face of the host plasma membrane. Interacts (via ectodomain) with RON2 (via C-terminus); RON2 serves as the receptor for AMA1 on the host plasma membrane. AMA1 and the RON proteins are initially in distinct compartments within the parasite, namely the micronemes and the rhoptries, and interaction happens only upon initiation of invasion when the micronemes and rhoptries discharge. Post-translationally, proteolytically cleaved during invasion within its transmembrane domain, releasing a soluble form from the tachyzoite surface. The cytosolic tail generated by ROM4 cleavage during invasion may trigger parasite replication within the parasitophorous vacuole.

It is found in the cell membrane. The protein localises to the secreted. Its function is as follows. Essential microneme protein that plays an important role in host cell invasion. Part of the moving junction (MJ) complex, a ringlike structure formed between the plasma membranes of the apical tip of the parasite and the target host cell. During invasion, the MJ migrates from the anterior to the posterior of the parasite, leading to internalization of the parasite into a parasitophorous vacuole (PV). This is Apical membrane antigen 1 (AMA1) from Toxoplasma gondii (strain ATCC 50861 / VEG).